Consider the following 43-residue polypeptide: Snake venom metalloproteinase crotalin (43 aa).

A Peptidase M12B domain is found at 1 to 43; that stretch reads LLRRKSHDHAQNHDGDKCLRGASLGYYQSFLNQYKPQCILNKP. His-13 contacts Zn(2+).

This sequence belongs to the venom metalloproteinase (M12B) family. P-I subfamily. As to quaternary structure, monomer. Zn(2+) is required as a cofactor. This protein autoproteolytically degrades to 10 kDa and 14 kDa fragments in the presence of SDS. Interestingly, the two fragments, as well as reduced crotalin are able to bind vWF, indicating that the binding activity does not require a specific protein conformation. In terms of tissue distribution, expressed by the venom gland.

It localises to the secreted. In terms of biological role, snake venom zinc metalloproteinase that inhibits ristocin-induced platelet aggregation by abolishing the binding of von Willebrand factor (vWF) to platelet glycoprotein Ib alpha (GPIBA) through the cleavage of both GP1BA and vWF. Also has fibrinogenolytic activities by degrading the alpha- (FGA) and beta-chain (FGB) of fibrinogen. In vivo, induces a slight hemorrhage when applied to chick chorioallantoic membrane and has potent antithrombic effect. In Crotalus atrox (Western diamondback rattlesnake), this protein is Snake venom metalloproteinase crotalin.